The sequence spans 1036 residues: Zinc finger protein 532 (1036 aa).

Disordered regions lie at residues 26-92 (PKAA…LHNG), 106-206 (GAKS…EAES), 220-265 (RKAE…PSSK), and 281-362 (AASD…KVRI). Positions 32–52 (SGHDDHESHIKQNAHVDDDSH) are enriched in basic and acidic residues. Ser130, Ser133, and Ser134 each carry phosphoserine. The span at 136 to 151 (EEFEDDEKIEVDDPPD) shows a compositional bias: acidic residues. Lys175 carries the N6-acetyllysine modification. Positions 182–193 (ENSSKTGVSTSG) are enriched in polar residues. 2 stretches are compositionally biased toward basic and acidic residues: residues 194-205 (HTDKNKVKREAE) and 220-249 (RKAEDKLKENSEKMLESRVLDGKPSSEKSD). Positions 253–265 (AAAASSKTKPSSK) are enriched in low complexity. A compositionally biased stretch (basic and acidic residues) spans 302–314 (EVNDSPKAADKSP). Residues Ser306 and Ser313 each carry the phosphoserine modification. Over residues 336 to 353 (SVSSENSSKGSPSSPVGS) the composition is skewed to low complexity. Ser433 carries the phosphoserine modification. Residues Lys458 and Lys515 each participate in a glycyl lysine isopeptide (Lys-Gly) (interchain with G-Cter in SUMO2) cross-link. The C2H2-type 1; degenerate zinc finger occupies 615–634 (YKCLECGDAFALEKSLSQHY). The C2H2-type 2; degenerate zinc-finger motif lies at 751–775 (LKCLECNEVFQDEPSLATHFQHAAD). The C2H2-type 3 zinc finger occupies 784–807 (HPCRQCDKSFSSSHSLCRHNRIKH). Residues 814-840 (YACSHCPDSRRTFTKRLMLERHIQLMH) form a C2H2-type 4; degenerate zinc finger. The segment at 847–877 (VKELSDDAGDVTNDEEEEAEIKEDAKVPSPK) is disordered. Residues 852–867 (DDAGDVTNDEEEEAEI) show a composition bias toward acidic residues. Residues 868–877 (KEDAKVPSPK) are compositionally biased toward basic and acidic residues. A Phosphoserine modification is found at Ser875. Glycyl lysine isopeptide (Lys-Gly) (interchain with G-Cter in SUMO2) cross-links involve residues Lys879 and Lys902. 2 consecutive C2H2-type zinc fingers follow at residues 938-961 (HQCRECGLCYTSHGSLARHLFIVH) and 999-1021 (RKCKVCAKTFETEAALNTHMRTH). Residues 966 to 1000 (PQPVSKQNGAGEDSQQENKPSPEDEAAEGAASDRK) form a disordered region.

This sequence belongs to the krueppel C2H2-type zinc-finger protein family.

It localises to the nucleus. Its function is as follows. May be involved in transcriptional regulation. This is Zinc finger protein 532 (Znf532) from Mus musculus (Mouse).